The chain runs to 518 residues: Glutamate--cysteine ligase (518 aa).

The protein belongs to the glutamate--cysteine ligase type 1 family. Type 1 subfamily.

The catalysed reaction is L-cysteine + L-glutamate + ATP = gamma-L-glutamyl-L-cysteine + ADP + phosphate + H(+). It functions in the pathway sulfur metabolism; glutathione biosynthesis; glutathione from L-cysteine and L-glutamate: step 1/2. This chain is Glutamate--cysteine ligase, found in Cronobacter sakazakii (strain ATCC BAA-894) (Enterobacter sakazakii).